Consider the following 576-residue polypeptide: Sulfite reductase [NADPH] hemoprotein beta-component (576 aa).

Residues cysteine 435, cysteine 441, cysteine 480, and cysteine 484 each coordinate [4Fe-4S] cluster. A siroheme-binding site is contributed by cysteine 484.

It belongs to the nitrite and sulfite reductase 4Fe-4S domain family. Alpha(8)-beta(8). The alpha component is a flavoprotein, the beta component is a hemoprotein. The cofactor is siroheme. It depends on [4Fe-4S] cluster as a cofactor.

The catalysed reaction is hydrogen sulfide + 3 NADP(+) + 3 H2O = sulfite + 3 NADPH + 4 H(+). The protein operates within sulfur metabolism; hydrogen sulfide biosynthesis; hydrogen sulfide from sulfite (NADPH route): step 1/1. Component of the sulfite reductase complex that catalyzes the 6-electron reduction of sulfite to sulfide. This is one of several activities required for the biosynthesis of L-cysteine from sulfate. The protein is Sulfite reductase [NADPH] hemoprotein beta-component of Photorhabdus laumondii subsp. laumondii (strain DSM 15139 / CIP 105565 / TT01) (Photorhabdus luminescens subsp. laumondii).